The sequence spans 120 residues: Jacalin-related lectin 39 (120 aa).

A Jacalin-type lectin domain is found at 6–120 (SRDHADFVAH…KRTFDFGGFN (115 aa)).

It belongs to the jacalin lectin family.

In Arabidopsis thaliana (Mouse-ear cress), this protein is Jacalin-related lectin 39 (JAL39).